Here is a 317-residue protein sequence, read N- to C-terminus: Protease 7 (317 aa).

Positions 1 to 20 are cleaved as a signal peptide; sequence MRAKLLGIVLTTPIAISSFA. Over 21 to 31 the chain is Periplasmic; it reads STETLSFTPDN. The beta stranded transmembrane segment at 32 to 41 threads the bilayer; it reads INADISLGTL. At 42-69 the chain is on the extracellular side; sequence SGKTKERVYLAEEGGRKVSQLDWKFNNA. Residues 70–78 form a beta stranded membrane-spanning segment; the sequence is AIIKGAINW. The Periplasmic segment spans residues 79–83; the sequence is DLMPQ. A beta stranded membrane pass occupies residues 84–92; sequence ISIGAAGWT. Residues 93–130 are Extracellular-facing; it reads TLGSRGGNMVDQDWMDSSNPGTWTDESRHPDTQLNYAN. Residues Asp-103 and Asp-105 contribute to the active site. Residues 131-140 form a beta stranded membrane-spanning segment; that stretch reads EFDLNIKGWL. At 141–145 the chain is on the periplasmic side; sequence LNEPN. A beta stranded transmembrane segment spans residues 146-156; the sequence is YRLGLMAGYQE. Residues 157–197 lie on the Extracellular side of the membrane; that stretch reads SRYSFTARGGSYIYSSEEGFRDDIGSFPNGERAIGYKQRFK. Residues 198–209 traverse the membrane as a beta stranded segment; the sequence is MPYIGLTGSYRY. At 210–211 the chain is on the periplasmic side; that stretch reads ED. A beta stranded membrane pass occupies residues 212-221; that stretch reads FELGGTFKYS. At 222–250 the chain is on the extracellular side; that stretch reads GWVEASDNDEHYDPGKRITYRSKVKDQNY. Catalysis depends on residues Asp-230 and His-232. A beta stranded membrane pass occupies residues 251-261; it reads YSVSVNAGYYV. Over 262 to 264 the chain is Periplasmic; sequence TPN. Residues 265-274 form a beta stranded membrane-spanning segment; that stretch reads AKVYVEGTWN. Residues 275-306 are Extracellular-facing; sequence RVTNKKGNTSLYDHNDNTSDYSKNGAGIENYN. Residues 307–316 traverse the membrane as a beta stranded segment; that stretch reads FITTAGLKYT. Phe-317 is a topological domain (periplasmic).

It belongs to the peptidase A26 family. As to quaternary structure, homopentamer.

The protein resides in the cell outer membrane. The enzyme catalyses Has a virtual requirement for Arg in the P1 position and a slightly less stringent preference for this residue in the P1' position, which can also contain Lys, Gly or Val.. Its activity is regulated as follows. Inhibited by zinc. Its function is as follows. Protease that can cleave T7 RNA polymerase, ferric enterobactin receptor protein (FEP), antimicrobial peptide protamine and other proteins. This protease has a specificity for paired basic residues. This Escherichia coli O157:H7 protein is Protease 7 (ompT).